Reading from the N-terminus, the 49-residue chain is Large ribosomal subunit protein bL33A (49 aa).

The protein belongs to the bacterial ribosomal protein bL33 family.

The polypeptide is Large ribosomal subunit protein bL33A (Staphylococcus haemolyticus (strain JCSC1435)).